Here is a 266-residue protein sequence, read N- to C-terminus: MAKMTTLKMKERLEKELQAPNRQFSYNRDNDALTVVQSGKKVTLAIPQIIANYENDGDAAVEKIVYYVEEGFRAAAGNVELENNKANVYPVVRATSFPGETKAGEVLLTDDHTAETKIFYAVDLGKSYRFIEESMLKKAQLTHEEIREAAFNNLANLEIPLKKDSVNGNDFYFVRTNDGYDASRLLNEAFLREMREKLTGEMVLAVPHQDVLIIGDIQDNTGYDVLAHMTMDFFADGLVPITSLPFVYNNGKLEPIFIMAKNRLKE.

It belongs to the UPF0354 family.

The chain is UPF0354 protein lmo1608 from Listeria monocytogenes serovar 1/2a (strain ATCC BAA-679 / EGD-e).